The sequence spans 394 residues: Elongation factor Tu 2 (394 aa).

The tr-type G domain maps to 10-204 (KPHVNVGTIG…HLDTYIPEPE (195 aa)). Residues 19–26 (GHVDHGKT) are G1. Residue 19-26 (GHVDHGKT) participates in GTP binding. T26 provides a ligand contact to Mg(2+). The G2 stretch occupies residues 60-64 (GITIN). The tract at residues 81–84 (DCPG) is G3. Residues 81 to 85 (DCPGH) and 136 to 139 (NKCD) each bind GTP. The segment at 136-139 (NKCD) is G4. The G5 stretch occupies residues 174 to 176 (SAL).

It belongs to the TRAFAC class translation factor GTPase superfamily. Classic translation factor GTPase family. EF-Tu/EF-1A subfamily. In terms of assembly, monomer.

Its subcellular location is the cytoplasm. The catalysed reaction is GTP + H2O = GDP + phosphate + H(+). Its function is as follows. GTP hydrolase that promotes the GTP-dependent binding of aminoacyl-tRNA to the A-site of ribosomes during protein biosynthesis. The chain is Elongation factor Tu 2 from Haemophilus influenzae (strain 86-028NP).